A 159-amino-acid polypeptide reads, in one-letter code: Ribosomal RNA large subunit methyltransferase H (159 aa).

S-adenosyl-L-methionine is bound by residues L76, G108, and 127–132; that span reads FSKMTF.

It belongs to the RNA methyltransferase RlmH family. In terms of assembly, homodimer.

The protein localises to the cytoplasm. It carries out the reaction pseudouridine(1915) in 23S rRNA + S-adenosyl-L-methionine = N(3)-methylpseudouridine(1915) in 23S rRNA + S-adenosyl-L-homocysteine + H(+). Functionally, specifically methylates the pseudouridine at position 1915 (m3Psi1915) in 23S rRNA. The sequence is that of Ribosomal RNA large subunit methyltransferase H from Bifidobacterium animalis subsp. lactis (strain AD011).